The sequence spans 208 residues: Probable GTP-binding protein EngB (208 aa).

An EngB-type G domain is found at 23–205 (LTSEMVILGR…RQTLLKYLLT (183 aa)). GTP is bound by residues 31–38 (GRSNVGKS), 57–61 (GKTRL), 84–87 (DLPG), 154–157 (TKFD), and 182–184 (FNA). Mg(2+) contacts are provided by Ser38 and Thr59.

It belongs to the TRAFAC class TrmE-Era-EngA-EngB-Septin-like GTPase superfamily. EngB GTPase family. It depends on Mg(2+) as a cofactor.

Its function is as follows. Necessary for normal cell division and for the maintenance of normal septation. The chain is Probable GTP-binding protein EngB from Helicobacter pylori (strain HPAG1).